A 278-amino-acid polypeptide reads, in one-letter code: Envelope glycoprotein L (278 aa).

An N-terminal signal peptide occupies residues 1 to 30; sequence MCRRPDCGFSFSPGPVVLLWCCLLLPIVSS. The 214-residue stretch at 43-256 folds into the gL betaherpesvirus-type domain; that stretch reads VPAECPELTR…DKYYAGLPPE (214 aa). A disulfide bridge links Cys-154 with Cys-159.

Belongs to the herpesviridae glycoprotein L (gL) family. Betaherpesvirinae gL subfamily. Interacts with glycoprotein H (gH); this interaction is necessary for the correct processing and cell surface expression of gH. Forms the envelope pentamer complex (PC) composed of gH, gL, UL128, UL130, and UL131A. The pentamer interacts with host NRP2. Forms the envelope trimer complex composed of gH, gL, and gO. The trimer interacts with host PDGFRA. The trimer also interacts with host EPHA2.

It is found in the virion membrane. It localises to the host cell membrane. Its subcellular location is the host Golgi apparatus. The protein localises to the host trans-Golgi network. The heterodimer glycoprotein H-glycoprotein L is required for the fusion of viral and plasma membranes leading to virus entry into the host cell. Acts as a functional inhibitor of gH and maintains gH in an inhibited form. Upon binding to host integrins, gL dissociates from gH leading to activation of the viral fusion glycoproteins gB and gH. In human cytomegalovirus, forms two distincts complexes to mediate viral entry, a trimer and a pentamer at the surface of the virion envelope. The gH-gL-gO trimer is required for infection in fibroblasts by interacting with host PDGFRA, and in glioblastoma cells by interacting with host EPHA2. The gH-gL-UL128-UL130-UL131A pentamer is essential for viral entry in epithelial, endothelial and myeloid cells via interaction with host NRP2. In Homo sapiens (Human), this protein is Envelope glycoprotein L.